We begin with the raw amino-acid sequence, 1588 residues long: uncharacterized protein (1588 aa).

The span at 486–495 (RKRLTSKTED) shows a compositional bias: basic and acidic residues. Disordered stretches follow at residues 486 to 515 (RKRL…KRRP) and 1146 to 1176 (GGQD…RELN). The span at 498-507 (NQWTRDCQNS) shows a compositional bias: polar residues. Low complexity predominate over residues 1150 to 1169 (NVSDQSENQSENQSLESETS).

Its subcellular location is the virion. This is an uncharacterized protein from Acanthamoeba polyphaga (Amoeba).